Reading from the N-terminus, the 284-residue chain is L-ribulose-5-phosphate 3-epimerase UlaE (284 aa).

It belongs to the L-ribulose-5-phosphate 3-epimerase family.

It catalyses the reaction L-ribulose 5-phosphate = L-xylulose 5-phosphate. It functions in the pathway cofactor degradation; L-ascorbate degradation; D-xylulose 5-phosphate from L-ascorbate: step 3/4. Catalyzes the isomerization of L-xylulose-5-phosphate to L-ribulose-5-phosphate. Is involved in the anaerobic L-ascorbate utilization. The chain is L-ribulose-5-phosphate 3-epimerase UlaE from Escherichia coli O127:H6 (strain E2348/69 / EPEC).